The following is a 296-amino-acid chain: Glycine--tRNA ligase alpha subunit (296 aa).

This sequence belongs to the class-II aminoacyl-tRNA synthetase family. In terms of assembly, tetramer of two alpha and two beta subunits.

It localises to the cytoplasm. It carries out the reaction tRNA(Gly) + glycine + ATP = glycyl-tRNA(Gly) + AMP + diphosphate. This Listeria monocytogenes serotype 4b (strain CLIP80459) protein is Glycine--tRNA ligase alpha subunit.